Consider the following 239-residue polypeptide: Insulin-like growth factor-binding protein 3 receptor (239 aa).

The signal sequence occupies residues 1–38 (MGSCQAGHYLHFCLAHHPPLVCATLILLLLGLSGLGLG). Residues 39 to 205 (GFLLTHRTDL…EELTLCGSRL (167 aa)) lie on the Extracellular side of the membrane. N-linked (GlcNAc...) asparagine glycosylation is found at Asn-101 and Asn-167. A helical transmembrane segment spans residues 206-226 (LVLGFFLILFCGLCCLTAACF). Residues 227-239 (HPRRESHWSRTRL) are Cytoplasmic-facing.

In terms of assembly, interacts with IGFBP3. Interacts with CASP8.

It localises to the cell membrane. Its function is as follows. Cell death receptor specific for IGFBP3, may mediate caspase-8-dependent apoptosis upon ligand binding. The protein is Insulin-like growth factor-binding protein 3 receptor (TMEM219) of Bos taurus (Bovine).